The following is a 209-amino-acid chain: LexA repressor (209 aa).

Positions 29–49 (VREIGSAIGLSSTSTVHGHID) form a DNA-binding region, H-T-H motif. Active-site for autocatalytic cleavage activity residues include S130 and K168.

It belongs to the peptidase S24 family. As to quaternary structure, homodimer.

The catalysed reaction is Hydrolysis of Ala-|-Gly bond in repressor LexA.. In terms of biological role, represses a number of genes involved in the response to DNA damage (SOS response), including recA and lexA. In the presence of single-stranded DNA, RecA interacts with LexA causing an autocatalytic cleavage which disrupts the DNA-binding part of LexA, leading to derepression of the SOS regulon and eventually DNA repair. This is LexA repressor from Pediococcus pentosaceus (strain ATCC 25745 / CCUG 21536 / LMG 10740 / 183-1w).